Here is a 2462-residue protein sequence, read N- to C-terminus: Serine/threonine-protein kinase Wnk (2462 aa).

Disordered regions lie at residues 18–133 (NRAR…ASKS), 146–248 (NTLP…KSSS), and 365–461 (EDDV…DDDP). 2 stretches are compositionally biased toward polar residues: residues 29–58 (DGTTSCTTQPQRNTSISSEEQTVQGANIQK) and 65–78 (NRSASSRQKPNPTS). Residues 94-124 (TLSAHTSTSSTTSIQSSPIEPASSLPTLNTT) are compositionally biased toward low complexity. Residues 146 to 155 (NTLPGKTASS) show a composition bias toward polar residues. 3 stretches are compositionally biased toward basic and acidic residues: residues 190–205 (QSREQNEDEMDSKIEP), 237–247 (DTKKMEARKSS), and 396–413 (QSEKQAKSFDDITKKAES). The segment covering 414–452 (SEASAEEAAVTGSSTDASASPLPSTSLVSTTSSATSITK) has biased composition (low complexity). The 259-residue stretch at 471-729 (FKYDKEVGRG…CNELLESEFF (259 aa)) folds into the Protein kinase domain. ATP contacts are provided by residues serine 481, 551 to 554 (TELM), and lysine 601. Aspartate 618 (proton acceptor) is an active-site residue. A phosphoserine; by autocatalysis mark is found at serine 628 and serine 632. 3 disordered regions span residues 844 to 873 (LQKQRESLPTNVDEDEEEEEESEDEEDGVK), 893 to 923 (LALSTNSVEPQQLSTRSNTSIPNSGIQQPVQ), and 1006 to 1055 (PQQQ…LQQQ). Positions 855–870 (VDEDEEEEEESEDEED) are enriched in acidic residues. Positions 893 to 918 (LALSTNSVEPQQLSTRSNTSIPNSGI) are enriched in polar residues. 2 stretches are compositionally biased toward low complexity: residues 1006–1034 (PQQQVNQQQQQPQMMQQIPQQVQVQQPQT) and 1041–1055 (HEQQPQQQQQPLQQQ). The stretch at 1142 to 1178 (AQHQLQQLQQQQLQQQQLQQQQQIQQQQLQQQQLQQQ) forms a coiled coil. Over residues 1236 to 1251 (QGGQVTLSDAQQQQHP) the composition is skewed to polar residues. 9 disordered regions span residues 1236–1256 (QGGQVTLSDAQQQQHPGFSAV), 1322–1382 (QQQQ…EQIS), 1418–1465 (GALE…PKLS), 1554–1578 (LTRQRSTFRSHQRHRSRDETASDIT), 1615–1699 (NIPN…KDKK), 1762–1790 (DTSENAQQATEAEAEKPKDKSGQAVGNQG), 1828–1895 (QASP…SVGS), 1929–1966 (HEKQLSKQPSLEKPSATSILTNNSDPPQRNPSNGSINQ), and 2122–2229 (THVQ…FIQS). Residues 1559–1568 (STFRSHQRHR) are compositionally biased toward basic residues. Positions 1627–1641 (STPPTTTSTMSSSST) are enriched in low complexity. Residues 1642-1674 (ASRDAPNSSNDVTIGSGSVSRKTSTASEYTSLS) are compositionally biased toward polar residues. Composition is skewed to polar residues over residues 1828–1852 (QASPAMSSLKATSGQPQTQEITKPN), 1861–1894 (SVGQNTPTAALTSARGSGSSVYNSRRTSIDNSVG), and 1943–1966 (SATSILTNNSDPPQRNPSNGSINQ). A compositionally biased stretch (low complexity) spans 2125-2136 (QQPSNLQPQQQS). Positions 2137 to 2160 (VHPNMTQQPQQTPLNGHPSMVNTL) are enriched in polar residues. Over residues 2161-2211 (QQQPPQQSLPMQTIQSQQQQHNQMPIISQQQQQQILMQQQQQQGSQQGSQQ) the composition is skewed to low complexity. Residues 2212-2229 (FNLPGTQQTHPQHQFIQS) show a composition bias toward polar residues.

It belongs to the protein kinase superfamily. Ser/Thr protein kinase family. WNK subfamily. Mg(2+) serves as cofactor. Post-translationally, autophosphorylated. Autophosphorylation at Ser-628 and Ser-632 promotes its activity.

It is found in the cytoplasm. The enzyme catalyses L-seryl-[protein] + ATP = O-phospho-L-seryl-[protein] + ADP + H(+). The catalysed reaction is L-threonyl-[protein] + ATP = O-phospho-L-threonyl-[protein] + ADP + H(+). Its activity is regulated as follows. Activated in response to hyperosmotic stress: cell shrinkage promotes formation of a membraneless compartment that concentrates wnk-1 with its downstrem substrates. Activation requires autophosphorylation. Autophosphorylation and subsequent activation is inhibited by increases in intracellular Cl(-) or K(+). In terms of biological role, serine/threonine-protein kinase component of the WNK-SPAK/OSR1 kinase cascade, which plays an important role in the regulation of electrolyte homeostasis and regulatory volume increase in response to hyperosmotic stress. Wnk mediates regulatory volume increase in response to hyperosmotic stress by acting as a molecular crowding sensor, which senses cell shrinkage and mediates formation of a membraneless compartment by undergoing liquid-liquid phase separation. The membraneless compartment concentrates Wnk with its substrate Fray, promoting Wnk-dependent phosphorylation and activation of downstream kinase Fray. Following activation, Fray catalyzes phosphorylation of ion cotransporters Ncc69 and Irk1, regulating their activity. Phosphorylation of Na-K-Cl cotransporter Ncc69 promotes its activation and ion influx. Involved in circadian rhythms in small ventral lateral (sLNv) pacemaker neurons: in the morning, Wnk activity is repressed by high levels of intracellular chloride; in contrast Wnk activation in the evening promotes the activation of the inwardly rectifying potassium channel Irk1 via Fray. Acts as a positive regulator of the canonical Wnt signaling pathway during wing disk development. The sequence is that of Serine/threonine-protein kinase Wnk from Drosophila melanogaster (Fruit fly).